The chain runs to 277 residues: Hydroxyethylthiazole kinase (277 aa).

Met56 is a substrate binding site. Residues Arg131 and Thr177 each contribute to the ATP site. Ala204 contributes to the substrate binding site.

This sequence belongs to the Thz kinase family. Mg(2+) serves as cofactor.

The enzyme catalyses 5-(2-hydroxyethyl)-4-methylthiazole + ATP = 4-methyl-5-(2-phosphooxyethyl)-thiazole + ADP + H(+). It participates in cofactor biosynthesis; thiamine diphosphate biosynthesis; 4-methyl-5-(2-phosphoethyl)-thiazole from 5-(2-hydroxyethyl)-4-methylthiazole: step 1/1. Catalyzes the phosphorylation of the hydroxyl group of 4-methyl-5-beta-hydroxyethylthiazole (THZ). The sequence is that of Hydroxyethylthiazole kinase from Gemmatimonas aurantiaca (strain DSM 14586 / JCM 11422 / NBRC 100505 / T-27).